A 930-amino-acid polypeptide reads, in one-letter code: GPI ethanolamine phosphate transferase 1 (930 aa).

Over 1–8 the chain is Cytoplasmic; sequence MARLGRTG. A helical transmembrane segment spans residues 9 to 29; it reads FLTLAVVFHLIYAYSIFDIYF. Topologically, residues 30-466 are lumenal; sequence VSPIVSGMRP…LQTYDWLFLR (437 aa). A glycan (N-linked (GlcNAc...) asparagine) is linked at N148. The chain crosses the membrane as a helical span at residues 467–487; that stretch reads TIVTFGYVGWIAYALTTVIHL. At 488–498 the chain is on the cytoplasmic side; it reads HVLHGASESDR. The chain crosses the membrane as a helical span at residues 499 to 519; that stretch reads TTASISFFSSVLVALFSVFLY. The Lumenal segment spans residues 520-521; it reads QG. Residues 522–542 form a helical membrane-spanning segment; it reads SPWRYYLYGFFPIFFWEEVFA. Over 543-569 the chain is Cytoplasmic; it reads RRKAFHAGRAGALLLPKRDLHSNKVED. The chain crosses the membrane as a helical span at residues 570–590; sequence IDTITYGGAFMLLTGLLYLLF. Residues 591–611 lie on the Lumenal side of the membrane; that stretch reads EDEILGTSHQPAAVSRKGSRN. Residues 612–632 traverse the membrane as a helical segment; that stretch reads IMGLQLGMVLLALIVTRSSAA. Residues 633–639 are Cytoplasmic-facing; that stretch reads SLQAKQG. Residues 640 to 660 traverse the membrane as a helical segment; the sequence is LPFGNQVVGWGVLIASLLLPF. Residues 661–684 are Lumenal-facing; the sequence is AHRLYPNSHYLHRLMIIFLTFSPT. The chain crosses the membrane as a helical span at residues 685-705; it reads FIILTISYEGLFYFAFCMTLV. The Cytoplasmic segment spans residues 706–761; that stretch reads TWVRLEHATYVYTAKPVAKQAQETIEPPKKANPGATTVVDGETYRFRTLTVSDARV. Residues 762-782 form a helical membrane-spanning segment; it reads ALFFFFLLQSAFFSTGNIASI. At 783–803 the chain is on the lumenal side; the sequence is SSFSLDSVYRLIPVFNPFSQG. A helical transmembrane segment spans residues 804–824; that stretch reads ALLILKLLIPFAIISANLGIL. Over 825–833 the chain is Cytoplasmic; sequence NRRLEVAPS. Residues 834–854 form a helical membrane-spanning segment; it reads ALFMVVMAISDVMTLNFFYMV. Topologically, residues 855 to 870 are lumenal; sequence RDEGSWLDIGTTISHF. The chain crosses the membrane as a helical span at residues 871-891; sequence CIASFLCTFVAGLEFLSEVFI. At 892–930 the chain is on the cytoplasmic side; that stretch reads SGVDFGLRTDAITASVPDIVNGITSKGQKDVPNGVEDKE.

The protein belongs to the PIGG/PIGN/PIGO family. PIGN subfamily.

It is found in the endoplasmic reticulum membrane. Its pathway is glycolipid biosynthesis; glycosylphosphatidylinositol-anchor biosynthesis. Its function is as follows. Ethanolamine phosphate transferase involved in glycosylphosphatidylinositol-anchor biosynthesis. Transfers ethanolamine phosphate to the first alpha-1,4-linked mannose of the glycosylphosphatidylinositol precursor of GPI-anchor. The polypeptide is GPI ethanolamine phosphate transferase 1 (mcd4) (Emericella nidulans (strain FGSC A4 / ATCC 38163 / CBS 112.46 / NRRL 194 / M139) (Aspergillus nidulans)).